Reading from the N-terminus, the 201-residue chain is Recombination protein RecR (201 aa).

The segment at 60–75 (CSVCGNVDTIDPCSIC) adopts a C4-type zinc-finger fold. The 96-residue stretch at 83-178 (ATIIVVEDIA…KVTRLAHGVP (96 aa)) folds into the Toprim domain.

Belongs to the RecR family.

May play a role in DNA repair. It seems to be involved in an RecBC-independent recombinational process of DNA repair. It may act with RecF and RecO. This is Recombination protein RecR from Bartonella henselae (strain ATCC 49882 / DSM 28221 / CCUG 30454 / Houston 1) (Rochalimaea henselae).